Consider the following 344-residue polypeptide: Lipase chaperone (344 aa).

Residues 14–34 (VAVYGAVGLAAIAGVAIWSGA) form a helical membrane-spanning segment.

The protein belongs to the lipase chaperone family.

The protein localises to the cell inner membrane. May be involved in the folding of the extracellular lipase during its passage through the periplasm. In Burkholderia ambifaria (strain MC40-6), this protein is Lipase chaperone.